The following is a 120-amino-acid chain: Internal scaffolding protein B (120 aa).

Polar residues predominate over residues 1–37 (MEQFTQNQNQPHTQESVQNTNVSQFRNETVINGSPVS). A disordered region spans residues 1–65 (MEQFTQNQNQ…HLEAERQERA (65 aa)). Positions 47–65 (GLRRDPVQQHLEAERQERA) are enriched in basic and acidic residues.

It belongs to the microviridae B protein family. In terms of assembly, component of the procapsid complex composed of 60 copies of the internally located B, 240 copies of the external scaffolding protein D, 60 copies of each of the viral structural proteins F and G proteins, and 12 copies of H. The proteolytic cleavage of the internal scaffolding protein B releases the scaffold protein in order to continue virion assembly.

It localises to the host cytoplasm. Functionally, participates in the assembly of the viral procapsid in the cytoplasm. Forms first a 12S pre-assembly complex with protein H, and F and G pentamers, then twelve 12S complexes are joined by the D protein to form the procapsid. Internal scaffold protein B is released from the procapsid upon genome packaging. Autoproteolytic activity cleaves protein B and probably facilitates its removal through the pores of the procapsid. The chain is Internal scaffolding protein B (B) from Escherichia coli (Bacteriophage G4).